The following is a 252-amino-acid chain: 5'-nucleotidase SurE (252 aa).

Residues aspartate 8, aspartate 9, serine 39, and asparagine 91 each coordinate a divalent metal cation.

It belongs to the SurE nucleotidase family. Requires a divalent metal cation as cofactor.

It localises to the cytoplasm. The enzyme catalyses a ribonucleoside 5'-phosphate + H2O = a ribonucleoside + phosphate. Nucleotidase that shows phosphatase activity on nucleoside 5'-monophosphates. The protein is 5'-nucleotidase SurE of Bordetella pertussis (strain Tohama I / ATCC BAA-589 / NCTC 13251).